The primary structure comprises 735 residues: Catalase-peroxidase (735 aa).

Polar residues predominate over residues 1–26 (MENQNRQNASQCPFHGSITNQSSNRT). The interval 1–29 (MENQNRQNASQCPFHGSITNQSSNRTTNK) is disordered. Positions 100–223 (WHSAGTYRIG…LAASVMGLIY (124 aa)) form a cross-link, tryptophyl-tyrosyl-methioninium (Trp-Tyr) (with M-249). His-101 (proton acceptor) is an active-site residue. Positions 223–249 (YVNPEGPDGKPDPKAAARDIRETFRRM) form a cross-link, tryptophyl-tyrosyl-methioninium (Tyr-Met) (with W-100). Residue His-264 participates in heme b binding.

It belongs to the peroxidase family. Peroxidase/catalase subfamily. As to quaternary structure, homodimer or homotetramer. It depends on heme b as a cofactor. Formation of the three residue Trp-Tyr-Met cross-link is important for the catalase, but not the peroxidase activity of the enzyme.

The enzyme catalyses H2O2 + AH2 = A + 2 H2O. It catalyses the reaction 2 H2O2 = O2 + 2 H2O. Bifunctional enzyme with both catalase and broad-spectrum peroxidase activity. The polypeptide is Catalase-peroxidase (Geobacillus thermodenitrificans (strain NG80-2)).